We begin with the raw amino-acid sequence, 304 residues long: tRNA pseudouridine synthase B (304 aa).

Asp48 acts as the Nucleophile in catalysis.

This sequence belongs to the pseudouridine synthase TruB family. Type 1 subfamily.

It catalyses the reaction uridine(55) in tRNA = pseudouridine(55) in tRNA. Functionally, responsible for synthesis of pseudouridine from uracil-55 in the psi GC loop of transfer RNAs. This is tRNA pseudouridine synthase B from Pseudomonas paraeruginosa (strain DSM 24068 / PA7) (Pseudomonas aeruginosa (strain PA7)).